Consider the following 445-residue polypeptide: Probable D-serine dehydratase (445 aa).

Lysine 111 carries the N6-(pyridoxal phosphate)lysine modification.

This sequence belongs to the serine/threonine dehydratase family. DsdA subfamily. Pyridoxal 5'-phosphate is required as a cofactor.

It carries out the reaction D-serine = pyruvate + NH4(+). This is Probable D-serine dehydratase from Burkholderia pseudomallei (strain 668).